We begin with the raw amino-acid sequence, 416 residues long: 2,3-bisphosphoglycerate-independent phosphoglycerate mutase (416 aa).

The protein belongs to the BPG-independent phosphoglycerate mutase family. A-PGAM subfamily.

The enzyme catalyses (2R)-2-phosphoglycerate = (2R)-3-phosphoglycerate. It participates in carbohydrate degradation; glycolysis; pyruvate from D-glyceraldehyde 3-phosphate: step 3/5. In terms of biological role, catalyzes the interconversion of 2-phosphoglycerate and 3-phosphoglycerate. This Ignicoccus hospitalis (strain KIN4/I / DSM 18386 / JCM 14125) protein is 2,3-bisphosphoglycerate-independent phosphoglycerate mutase.